We begin with the raw amino-acid sequence, 220 residues long: U1 small nuclear ribonucleoprotein C (220 aa).

The Matrin-type zinc finger occupies 4 to 36 (YYCDYCDIYLTHDSMNARKAHNSGRNHVANVRD). Pro residues-rich tracts occupy residues 88 to 130 (PGPP…PFLP) and 147 to 165 (PPFPPNTASPNPGMPPFRP). A disordered region spans residues 88–220 (PGPPPPGAFP…HPDRLRMLGQ (133 aa)). Residues 166–200 (PMGMGMPPAPAQAQAQGSPMGMPQQGQQGTFTPTQ) are compositionally biased toward low complexity. Positions 211–220 (HPDRLRMLGQ) are enriched in basic and acidic residues.

This sequence belongs to the U1 small nuclear ribonucleoprotein C family. U1 snRNP is composed of the 7 core Sm proteins B/B', D1, D2, D3, E, F and G that assemble in a heptameric protein ring on the Sm site of the small nuclear RNA to form the core snRNP, and at least 3 U1 snRNP-specific proteins U1-70K, U1-A and U1-C. U1-C interacts with U1 snRNA and the 5' splice-site region of the pre-mRNA.

The protein resides in the nucleus. Its function is as follows. Component of the spliceosomal U1 snRNP, which is essential for recognition of the pre-mRNA 5' splice-site and the subsequent assembly of the spliceosome. U1-C is directly involved in initial 5' splice-site recognition for both constitutive and regulated alternative splicing. The interaction with the 5' splice-site seems to precede base-pairing between the pre-mRNA and the U1 snRNA. Stimulates commitment or early (E) complex formation by stabilizing the base pairing of the 5' end of the U1 snRNA and the 5' splice-site region. This Cryptococcus neoformans var. neoformans serotype D (strain JEC21 / ATCC MYA-565) (Filobasidiella neoformans) protein is U1 small nuclear ribonucleoprotein C.